Consider the following 547-residue polypeptide: ATP synthase subunit beta, mitochondrial (547 aa).

A mitochondrion-targeting transit peptide spans methionine 1–tyrosine 45. Positions lysine 52–threonine 62 are enriched in low complexity. Positions lysine 52 to lysine 74 are disordered. Glycine 226–threonine 233 contacts ATP.

It belongs to the ATPase alpha/beta chains family. As to quaternary structure, F-type ATPases have 2 components, CF(1) - the catalytic core - and CF(0) - the membrane proton channel. CF(1) has five subunits: alpha(3), beta(3), gamma(1), delta(1), epsilon(1). CF(0) has three main subunits: a, b and c.

The protein localises to the mitochondrion. Its subcellular location is the mitochondrion inner membrane. The enzyme catalyses ATP + H2O + 4 H(+)(in) = ADP + phosphate + 5 H(+)(out). In terms of biological role, mitochondrial membrane ATP synthase (F(1)F(0) ATP synthase or Complex V) produces ATP from ADP in the presence of a proton gradient across the membrane which is generated by electron transport complexes of the respiratory chain. F-type ATPases consist of two structural domains, F(1) - containing the extramembraneous catalytic core, and F(0) - containing the membrane proton channel, linked together by a central stalk and a peripheral stalk. During catalysis, ATP synthesis in the catalytic domain of F(1) is coupled via a rotary mechanism of the central stalk subunits to proton translocation. Subunits alpha and beta form the catalytic core in F(1). Rotation of the central stalk against the surrounding alpha(3)beta(3) subunits leads to hydrolysis of ATP in three separate catalytic sites on the beta subunits. The protein is ATP synthase subunit beta, mitochondrial (ATPB) of Daucus carota (Wild carrot).